The primary structure comprises 139 residues: Large ribosomal subunit protein uL16 (139 aa).

It belongs to the universal ribosomal protein uL16 family. Part of the 50S ribosomal subunit.

Functionally, binds 23S rRNA and is also seen to make contacts with the A and possibly P site tRNAs. This is Large ribosomal subunit protein uL16 from Rippkaea orientalis (strain PCC 8801 / RF-1) (Cyanothece sp. (strain PCC 8801)).